The following is a 199-amino-acid chain: Glycerol-3-phosphate acyltransferase (199 aa).

5 helical membrane passes run Y3–P23, V50–F70, I77–L97, G110–I130, and Y136–N156.

The protein belongs to the PlsY family. In terms of assembly, probably interacts with PlsX.

Its subcellular location is the cell inner membrane. The catalysed reaction is an acyl phosphate + sn-glycerol 3-phosphate = a 1-acyl-sn-glycero-3-phosphate + phosphate. Its pathway is lipid metabolism; phospholipid metabolism. Functionally, catalyzes the transfer of an acyl group from acyl-phosphate (acyl-PO(4)) to glycerol-3-phosphate (G3P) to form lysophosphatidic acid (LPA). This enzyme utilizes acyl-phosphate as fatty acyl donor, but not acyl-CoA or acyl-ACP. The sequence is that of Glycerol-3-phosphate acyltransferase from Pseudothermotoga lettingae (strain ATCC BAA-301 / DSM 14385 / NBRC 107922 / TMO) (Thermotoga lettingae).